The sequence spans 163 residues: RxLR effector protein PITG_13625 (163 aa).

The signal sequence occupies residues 1 to 23 (MKVSKAIVALAALCMALLAPAAG). The RxLR-dEER motif lies at 37–52 (RHLRQESAELATTPEE).

The protein belongs to the RxLR effector family.

Its subcellular location is the secreted. The protein localises to the host cell membrane. Effector that enhances P.infestans colonization of Nicotiana benthamiana leaves. The sequence is that of RxLR effector protein PITG_13625 from Phytophthora infestans (strain T30-4) (Potato late blight agent).